Here is a 305-residue protein sequence, read N- to C-terminus: MDDFRSICLLSLAMLVACYVAGIIPLAVNFSEERLKLVTVLGAGLLCGTALAVIVPEGVHALYEDILEGKHHPANEMQHVMESEKVAEIAVVHEYGHDHSRLHAYIGVSLVLGFVFMLLVDQIGSSHVHSTDDPEAARSGNSKITTTLGLVVHAAADGVALGAAASTSQTSVQLIVFVAIMLHKAPAAFGLVSFLMHAGLERNRIRKHLLVFALAAPVMSMVTYLGLSKSSKEALSEVNATGVAMLFSAGTFLYVATVHVLPEVGGIAHSHRPESTGGKGLSRLEVAALVLGCLIPLVLSIGHHH.

A helical transmembrane segment spans residues 7–27 (ICLLSLAMLVACYVAGIIPLA). N29 carries an N-linked (GlcNAc...) asparagine glycan. Helical transmembrane passes span 35 to 55 (LKLV…AVIV), 104 to 124 (AYIG…DQIG), 144 to 164 (ITTT…LGAA), 174 to 194 (LIVF…LVSF), and 208 to 228 (HLLV…LGLS). An N-linked (GlcNAc...) asparagine glycan is attached at N239. The next 2 helical transmembrane spans lie at 242–262 (GVAM…HVLP) and 284–304 (LEVA…IGHH).

Belongs to the ZIP transporter (TC 2.A.5) family.

Its subcellular location is the golgi apparatus. It is found in the trans-Golgi network membrane. The protein resides in the cell membrane. The protein localises to the cytoplasm. It localises to the perinuclear region. Its subcellular location is the mitochondrion. It is found in the nucleus. It catalyses the reaction Zn(2+)(in) = Zn(2+)(out). Its function is as follows. Transports zinc ions across cell and organelle membranes into the cytoplasm and regulates intracellular zinc homeostasis. Participates in the zinc ions efflux out of the secretory compartments. Regulates intracellular zinc level, resulting in the enhancement of AKT1 and MAPK3/MAPK1 (Erk1/2) phosphorylation in response to the BCR activation. Also functions as a membrane androgen receptor that mediates, through a G protein, the non-classical androgen signaling pathway, characterized by the activation of MAPK3/MAPK1 (Erk1/2) and transcription factors CREB1 or ATF1. Moreover, has dual functions as a membrane-bound androgen receptor and as an androgen-dependent zinc transporter both of which are mediated through an inhibitory G protein (Gi) that mediates both MAP kinase and zinc signaling leading to the androgen-dependent apoptotic process. The sequence is that of Zinc transporter ZIP9 from Gallus gallus (Chicken).